A 343-amino-acid chain; its full sequence is MQSPPPDPLGDCLRNWEDLQQDFQGIQETHRLYRVKLEELTKLQDNCTNSITRQKKRLQELALVLKKCRPSLPSESLEAAQELESQIKERQGLFFDMEAYLPKKNGLYLSLVLGNVNVTLLSKQAKFAYKDEYEKFKLYLTIILIVISFTCRFLLNSRVTDAAFNFLLVWYYCTLTIRESILINNGSRIKGWWVFHHYVSTFLSGVMLTWPDGLMYQKFRNQFLSFSMYQSFVQFLQYYYQSGCLYRLRALGERHTMDLTVEGFQSWMWRGLTFLLPFLFFGHFWQLFNALTLFNLARDPECKEWQVLMCGLPFLLLFLGNFFTTLRVVHQKFHSQQHGSKKD.

Topologically, residues 1–132 (MQSPPPDPLG…KQAKFAYKDE (132 aa)) are cytoplasmic. Lysine 130 contributes to the CoA binding site. The helical transmembrane segment at 133–152 (YEKFKLYLTIILIVISFTCR) threads the bilayer. The Extracellular portion of the chain corresponds to 153–158 (FLLNSR). A helical transmembrane segment spans residues 159 to 177 (VTDAAFNFLLVWYYCTLTI). Residues 178 to 190 (RESILINNGSRIK) are Cytoplasmic-facing. Positions 187 and 188 each coordinate CoA. The chain crosses the membrane as a helical span at residues 191–209 (GWWVFHHYVSTFLSGVMLT). Over 210–218 (WPDGLMYQK) the chain is Extracellular. The chain crosses the membrane as a helical span at residues 219-240 (FRNQFLSFSMYQSFVQFLQYYY). Residues glutamine 237, tyrosine 240, glutamine 241, and histidine 283 each coordinate CoA. The Cytoplasmic portion of the chain corresponds to 241–270 (QSGCLYRLRALGERHTMDLTVEGFQSWMWR). A helical transmembrane segment spans residues 271–294 (GLTFLLPFLFFGHFWQLFNALTLF). The Extracellular segment spans residues 295–304 (NLARDPECKE). The helical transmembrane segment at 305 to 330 (WQVLMCGLPFLLLFLGNFFTTLRVVH) threads the bilayer. Residues 331-343 (QKFHSQQHGSKKD) are Cytoplasmic-facing. Lysine 332 provides a ligand contact to CoA.

This sequence belongs to the TMEM120 family. Homodimer. Forms heterooligomer with TMEM120B. Interacts with PKD2; TMEM120A inhibits PKD2 channel activity through the physical association of PKD2 with TMEM120A.

It localises to the cell membrane. It is found in the nucleus inner membrane. The protein localises to the endoplasmic reticulum. Its function is as follows. Multifunctional protein involved in mechanosensation, and plays an essential role in lipid metabolism and adipocyte differentiation. May function as a potential ion channel involved in sensing mechanical stimuli. Mediates the mechanosensitivity of the PKD2-TMEM120A channel complex through direct physical interaction. TMEM120A seems to affect mechanosensation by inhibiting PIEZO2 channels, possibly by altering cellular lipid content. TMEM120A is structurally similar to a lipid-modifying enzyme, ELOVL7, and contains a bound coenzyme A molecule, which suggests it might function as an enzyme in lipid metabolism. Additionnaly, implicated in innate immune response against Zika virus. Acts as a key activator of the antiviral signaling involving STING1. The polypeptide is Transmembrane protein 120A (Rattus norvegicus (Rat)).